The chain runs to 282 residues: tRNA N(3)-cytidine methyltransferase METTL6 (282 aa).

Residues W45, Y49, G87, D110, D136, L137, and I157 each coordinate S-adenosyl-L-methionine.

Belongs to the methyltransferase superfamily. METL family. In terms of assembly, monomer. Interacts with SARS1/SerRS; interaction is mediated via tRNA(Ser) and is required for N(3)-methylcytidine methylation.

It is found in the cytoplasm. The protein resides in the nucleus. The enzyme catalyses cytidine(32) in tRNA(Ser) + S-adenosyl-L-methionine = N(3)-methylcytidine(32) in tRNA(Ser) + S-adenosyl-L-homocysteine + H(+). Functionally, S-adenosyl-L-methionine-dependent methyltransferase that mediates N(3)-methylcytidine modification of residue 32 of the tRNA anticodon loop of tRNA(Ser), including tRNA(Ser)(UGA) and tRNA(Ser)(GCU). Interaction with SARS1/SerRS is required for N(3)-methylcytidine methylation. The sequence is that of tRNA N(3)-cytidine methyltransferase METTL6 (METTL6) from Pongo abelii (Sumatran orangutan).